The primary structure comprises 1246 residues: Probable membrane antigen 3 (1246 aa).

It localises to the virion tegument. The sequence is that of Probable membrane antigen 3 (3) from Saimiri sciureus (Common squirrel monkey).